The sequence spans 724 residues: Semaphorin-2A (724 aa).

Positions 1–25 are cleaved as a signal peptide; it reads MSLLQLSPLLALLLLLCSSVSETAA. Residues 45–522 enclose the Sema domain; it reads QGNNNYGKHG…TDHRIKQIDL (478 aa). Asn95 carries an N-linked (GlcNAc...) asparagine glycan. Cysteines 118 and 129 form a disulfide. 4 N-linked (GlcNAc...) asparagine glycosylation sites follow: Asn163, Asn190, Asn229, and Asn314. Disulfide bonds link Cys291–Cys399 and Cys315–Cys358. An N-linked (GlcNAc...) asparagine glycan is attached at Asn401. 2 cysteine pairs are disulfide-bonded: Cys525–Cys541 and Cys535–Cys550. The Ig-like C2-type domain occupies 552-663; it reads PYELDLLQDV…LCSYNITVDA (112 aa). A glycan (N-linked (GlcNAc...) asparagine) is linked at Asn563. Residues Cys590 and Cys647 are joined by a disulfide bond. N-linked (GlcNAc...) asparagine glycans are attached at residues Asn658, Asn670, and Asn708.

This sequence belongs to the semaphorin family. In terms of assembly, interacts with PlexB. As to expression, transiently expressed by a single large muscle during motoneuron outgrowth and synapse formation.

Its subcellular location is the secreted. Ligand for transmembrane receptor PlexB. Plays a role in growth cone guidance. Required for both proper adult behavior and survival. Can function as a selective target-derived signal that inhibits the formation of specific synaptic terminal arbors. Function in neurons is essential for adult survival, motor neuron survival, and is important for climbing behavior and activity. During embryogenesis, plays an important role in correct salivary gland positioning. The chain is Semaphorin-2A from Drosophila melanogaster (Fruit fly).